Consider the following 134-residue polypeptide: Cytochrome c-type biogenesis protein CcmE (134 aa).

Residues 1–7 lie on the Cytoplasmic side of the membrane; sequence MKRKYRR. Residues 8–28 form a helical; Signal-anchor for type II membrane protein membrane-spanning segment; sequence LFVVIITLSIFAGSVVFVLGK. Residues 29-134 lie on the Periplasmic side of the membrane; that stretch reads LKNNVSFFYT…MPNKYKTNNL (106 aa). Heme-binding residues include His120 and Tyr124.

The protein belongs to the CcmE/CycJ family.

It is found in the cell inner membrane. Functionally, heme chaperone required for the biogenesis of c-type cytochromes. Transiently binds heme delivered by CcmC and transfers the heme to apo-cytochromes in a process facilitated by CcmF and CcmH. The polypeptide is Cytochrome c-type biogenesis protein CcmE (Ehrlichia ruminantium (strain Gardel)).